We begin with the raw amino-acid sequence, 556 residues long: Formate--tetrahydrofolate ligase (556 aa).

65–72 (TPAGEGKT) is an ATP binding site.

The protein belongs to the formate--tetrahydrofolate ligase family.

The enzyme catalyses (6S)-5,6,7,8-tetrahydrofolate + formate + ATP = (6R)-10-formyltetrahydrofolate + ADP + phosphate. The protein operates within one-carbon metabolism; tetrahydrofolate interconversion. The protein is Formate--tetrahydrofolate ligase of Hyphomonas neptunium (strain ATCC 15444).